The sequence spans 105 residues: Heat shock protein HspQ (105 aa).

The disordered stretch occupies residues 74–105; sequence SSETQDEHPEQPSMDELARTIRKQLQAPRLRN.

The protein belongs to the HspQ family.

The protein localises to the cytoplasm. In terms of biological role, involved in the degradation of certain denaturated proteins, including DnaA, during heat shock stress. The chain is Heat shock protein HspQ from Citrobacter koseri (strain ATCC BAA-895 / CDC 4225-83 / SGSC4696).